A 213-amino-acid chain; its full sequence is Histone H1.1 (213 aa).

Residues 1–43 are disordered; sequence MSETAPVAQAASTATEKPAAAKKTKKPAKAAAPRKKPAGPSVS. S2 bears the N-acetylserine mark. Residues S2 and S12 each carry the phosphoserine modification. Over residues 8–18 the composition is skewed to low complexity; the sequence is AQAASTATEKP. At K17 the chain carries N6-acetyllysine. A compositionally biased stretch (basic residues) spans 20–37; sequence AAKKTKKPAKAAAPRKKP. Position 36 is an N6-(beta-hydroxybutyryl)lysine (K36). The region spanning 38 to 111 is the H15 domain; sequence AGPSVSELIV…GAAGSFKLNK (74 aa). S43 is subject to Phosphoserine. N6-(beta-hydroxybutyryl)lysine is present on K54. R56 is subject to Citrulline. K66 is subject to N6-(beta-hydroxybutyryl)lysine. S67 bears the Phosphoserine mark. K77 carries the post-translational modification N6-acetyllysine. Position 87 is an N6-(beta-hydroxybutyryl)lysine (K87). An N6-(beta-hydroxybutyryl)lysine; alternate modification is found at K92. K92 carries the post-translational modification N6-acetyllysine; alternate. A Phosphoserine modification is found at S106. K108 is subject to N6-(beta-hydroxybutyryl)lysine. The tract at residues 112 to 213 is disordered; sequence KAESKAITTK…KPKKAAPKKK (102 aa). Residues 120 to 144 are compositionally biased toward low complexity; it reads TKVSVKAKASGAAKKPKKTAGAAAK. The residue at position 121 (K121) is an N6-acetyllysine. Composition is skewed to basic residues over residues 145–178 and 185–213; these read KTVK…KKVA and KAVK…PKKK. T201 carries the post-translational modification Phosphothreonine.

The protein belongs to the histone H1/H5 family. Interacts with DFFB. Post-translationally, H1 histones are progressively phosphorylated during the cell cycle, becoming maximally phosphorylated during late G2 phase and M phase, and being dephosphorylated sharply thereafter. In terms of processing, citrullination at Arg-56 (H1R54ci) by PADI4 takes place within the DNA-binding site of H1 and results in its displacement from chromatin and global chromatin decondensation, thereby promoting pluripotency and stem cell maintenance. Hydroxybutyrylation of histones is induced by starvation. In terms of tissue distribution, restricted to thymus, testis and spleen. Present also in lymphocytic and neuronal cells. Increases in testis starting with a low level at day 5 and reaching high concentrations in 20-day old and adult animals.

It is found in the nucleus. The protein localises to the chromosome. Its function is as follows. Histone H1 protein binds to linker DNA between nucleosomes forming the macromolecular structure known as the chromatin fiber. Histones H1 are necessary for the condensation of nucleosome chains into higher-order structured fibers. Also acts as a regulator of individual gene transcription through chromatin remodeling, nucleosome spacing and DNA methylation. This chain is Histone H1.1, found in Mus musculus (Mouse).